The chain runs to 651 residues: Mitogen-activated protein kinase kinase kinase 2 (651 aa).

Residues 68-330 (WRKGQLIGRG…ASELLKHPFV (263 aa)) enclose the Protein kinase domain. ATP is bound by residues 74-82 (IGRGAFGTV) and Lys-97. Positions 105–130 (CASKEKTQAHIQELEEEVKLLKNLSH) form a coiled coil. Residues Lys-108 and Lys-110 each participate in a glycyl lysine isopeptide (Lys-Gly) (interchain with G-Cter in ubiquitin) cross-link. The active-site Proton acceptor is the Asp-196. Disordered stretches follow at residues 460–483 (GNGE…DENE), 537–601 (RGFL…VALS), and 618–651 (KRRE…SPGK). Basic and acidic residues predominate over residues 464–477 (TETKVSMEVDHPSY). The segment covering 570 to 599 (SPESGNSSGAPKNSNASAGAEQESNSQSVA) has biased composition (polar residues). Residues 605–628 (RKWKEELDQELERKRREITRQAGM) adopt a coiled-coil conformation.

The protein belongs to the protein kinase superfamily. STE Ser/Thr protein kinase family. MAP kinase kinase kinase subfamily. Expressed in roots and flowers.

Its subcellular location is the cytoplasm. The protein localises to the cytoskeleton. It carries out the reaction L-seryl-[protein] + ATP = O-phospho-L-seryl-[protein] + ADP + H(+). The catalysed reaction is L-threonyl-[protein] + ATP = O-phospho-L-threonyl-[protein] + ADP + H(+). Functionally, involved in cortical microtubules organization and stabilization by regulating the phosphorylation state of microtubule-associated proteins such as MAP65-1. The polypeptide is Mitogen-activated protein kinase kinase kinase 2 (ANP2) (Arabidopsis thaliana (Mouse-ear cress)).